The following is a 297-amino-acid chain: Probable ABC transporter phosphite binding protein PhnD1 (297 aa).

Positions 1-24 (MFNLKYFLVSSSLLFSVFSSPVFS) are cleaved as a signal peptide.

It belongs to the phosphate/phosphite/phosphonate binding protein family. As to quaternary structure, the complex may be composed of two ATP-binding proteins (PhnC1), two transmembrane proteins (PhnE1) and a solute-binding protein (PhnD1).

The protein localises to the periplasm. Functionally, probably part of the ABC transporter complex PhnD1C1E1. Binds strongly to inorganic phosphite and with very weak affinities to methylphosphonate (MPn) and phosphate. This chain is Probable ABC transporter phosphite binding protein PhnD1, found in Prochlorococcus marinus (strain MIT 9301).